A 116-amino-acid polypeptide reads, in one-letter code: Protein Rev (116 aa).

A phosphoserine; by host CK2 mark is found at Ser-5 and Ser-8. Residues 18–26 form a homomultimerization region; it reads LIKFLYQSN. Positions 23-49 are disordered; that stretch reads YQSNPPPNPEGTRQARRNRRRRWRERQ. Residues 34–50 carry the Nuclear localization signal and RNA-binding (RRE) motif; it reads TRQARRNRRRRWRERQR. A compositionally biased stretch (basic residues) spans 36–47; the sequence is QARRNRRRRWRE. Positions 73–84 match the Nuclear export signal and binding to XPO1 motif; that stretch reads LQLPPLERLTLD. 2 positions are modified to phosphoserine; by host: Ser-92 and Ser-99.

It belongs to the HIV-1 REV protein family. Homomultimer; when bound to the RRE. Multimeric assembly is essential for activity and may involve XPO1. Binds to human KPNB1, XPO1, TNPO1, RANBP5 and IPO7. Interacts with the viral Integrase. Interacts with human KHDRBS1. Interacts with human NAP1; this interaction decreases Rev multimerization and stimulates its activity. Interacts with human DEAD-box helicases DDX3 and DDX24; these interactions may serve for viral RNA export to the cytoplasm and packaging, respectively. Interacts with human PSIP1; this interaction may inhibit HIV-1 DNA integration by promoting dissociation of the Integrase-LEDGF/p75 complex. Asymmetrically arginine dimethylated at one site by host PRMT6. Methylation impairs the RNA-binding activity and export of viral RNA from the nucleus to the cytoplasm. In terms of processing, phosphorylated by protein kinase CK2. Presence of, and maybe binding to the N-terminus of the regulatory beta subunit of CK2 is necessary for CK2-mediated Rev's phosphorylation.

The protein resides in the host nucleus. It is found in the host nucleolus. It localises to the host cytoplasm. Escorts unspliced or incompletely spliced viral pre-mRNAs (late transcripts) out of the nucleus of infected cells. These pre-mRNAs carry a recognition sequence called Rev responsive element (RRE) located in the env gene, that is not present in fully spliced viral mRNAs (early transcripts). This function is essential since most viral proteins are translated from unspliced or partially spliced pre-mRNAs which cannot exit the nucleus by the pathway used by fully processed cellular mRNAs. Rev itself is translated from a fully spliced mRNA that readily exits the nucleus. Rev's nuclear localization signal (NLS) binds directly to KPNB1/Importin beta-1 without previous binding to KPNA1/Importin alpha-1. KPNB1 binds to the GDP bound form of RAN (Ran-GDP) and targets Rev to the nucleus. In the nucleus, the conversion from Ran-GDP to Ran-GTP dissociates Rev from KPNB1 and allows Rev's binding to the RRE in viral pre-mRNAs. Rev multimerization on the RRE via cooperative assembly exposes its nuclear export signal (NES) to the surface. Rev can then form a complex with XPO1/CRM1 and Ran-GTP, leading to nuclear export of the complex. Conversion from Ran-GTP to Ran-GDP mediates dissociation of the Rev/RRE/XPO1/RAN complex, so that Rev can return to the nucleus for a subsequent round of export. Beside KPNB1, also seems to interact with TNPO1/Transportin-1, RANBP5/IPO5 and IPO7/RANBP7 for nuclear import. The nucleoporin-like HRB/RIP is an essential cofactor that probably indirectly interacts with Rev to release HIV RNAs from the perinuclear region to the cytoplasm. The sequence is that of Protein Rev from Human immunodeficiency virus type 1 group M subtype B (isolate PCV12) (HIV-1).